We begin with the raw amino-acid sequence, 404 residues long: uncharacterized protein (404 aa).

It belongs to the lymphocryptovirus BTRF1 family.

This is an uncharacterized protein from Epstein-Barr virus (strain GD1) (HHV-4).